Here is a 4466-residue protein sequence, read N- to C-terminus: MADVVDPRLEFISEYILKSYKLKPDKWAKCINVEENKILMLEFLEKADNPQLVFTVNAAGLITPSYEFPSALKNTKAIYFIKKGREPVGKDNIKTTLVYGDLSYTPLEQLSALVDEILVPLLANPRNHEQWPVVVSQDVLRHVHNLKSSVYVVAGQVKGKTLLPLPVGSEKVETAAESEEKDDSYDRSLVHAIESVIIDWTHQIRDVLKRDSAQPLLEGLNPGPMVEINFWKAKCENLDCIFQQLRDPKVRKMKELLERTQSSYLPSFNNIERDVEAALTEAQDINCYLKPLIYQVESLDELEFPDMTPRLAPILHTVCLIWSNSDYYNTAPRIIVLLQEICNLLIDLCRTFLDPSEIFKLEPEESLEKVRGALAVLKAWRDLYDEHRAKLKDYFKDGREVKGWEFASPLVFTRMDNFTSRIETIQSLFETNVEFSKLEKTEMGSMKGRMLSQQVEKIHEEFQECAKVFTERPYDGLDPQCQEFLDDYEEFEKKVFDLDRRLGSILCQGFDDCCGLEAVFKMLDCYGPLLDRPVIRNDFECKYPVVLMLYDLELDQAKEIYDEHMRVEENDGNAPLNKNMPDVAGQLKWSAQLRDRISKPMGSLKHMEHPTGVRRILESEDAKVVFQKYEEMINLLNKYEQKVFENWTKGVDEVCKTNLDQSLITRDESTKLIKINFDPKLVAVLREVKYLQIRGEESIPESAASIYEKHETLRKYVANLDLTQAWYNKVRNTVLEVEFPLIEGQLADLDTRLKQAESELNWTSDSVWEYIQETRDQVHDLEKRVQQTKDNVDRIKKIMAEWTKQPLFERKELKKESLLALDDRQDRLKKRYAEISTAGEKIHSLIKENLGLFKADASSDIWKAYVDYVDDMVIDGFFNCIHCTLSYLLENTDPRHCAAPLFEARLELQVPDMIFNPSLDYGVADGFYDLVEMLISDTYKMASLVSRLAEHNGQEHYQADLEGMDDLSDVRNDLMDRVQTIMTKAQEYRNSFDNYAYLYVDDRKEFMRQFLLYNHVLTTEEIEAHAEDGVPECPPTLDQFKEQVDTYEKIYSEADEIEPEQVFDAWFRVDSKPFKAALLNIIKKWSFMFKQHLIDHVTNSLSELQEFIKVGNSGLTKTVEEGDYNGLVECMGHLMAVKERQAATDEMFEPIKQTIELLKTYDQEMSEEVHTQLQELPEQWNNTKKIAITVKQQVAPLQANEVAIIRRKCTSFDVRQHEFRERFRKEAPFIFTFEGPYQCLDRCHSEIYEMEEHMANLQESAGLFEVNMPDYKQLKACRREVRLLKALWDLIMIVRTSIEDWKTTPWLEINVEQMEMDCKKFAKDIRSLDKEMRAWDAYNGLDATVKNMLTSLRAVSELQNPAIRERHWQQLMAATKVKFTMDKETTLSDLLALNLHNFEDEVRNIVDKAVKEMGMEKVLKELNTTWSSMDFEYEPHSRTGISLLKSNEELIETLEDNQVQLQNLMTSKHIAHFLEEVSGWQKKLSTTDSVITIWFEVQRTWSHLESIFIGSEDIRNQLPEDSKRFDGIDTDFKELASEMEKTPNVVEATNRARLYDRLEAIQGSLVVCEKALAEYLETKRLAFPRFYFVSSADLLDILSQGNNPSQVQRHLSKLFDNMAKLKFKQDDEGNDTKLALGMYSKEGEYVDFDKECECTGQVEVWLNRVMDAMRSTVRSQFADAVVSYEEKPREQWLYDYPAQVALATTQVWWTTEVNISFARLEEGHENSMKDYNKKQIQQLNTLIGLLIGKLTKGDRQKIMTICTIDVHARDVVAMMVLKKVDNAQAFQWLSQLRHRWADDDKHCYANICDAQFKYSYEYLGNTPRLVITPLTDRCYITLTQSLHLVMSGAPAGPAGTGKTETTKDLGRALGIMVYVFNCSEQMDYKSCGNIYKGLSQTGAWGCFDEFNRISVEVLSVVAVQVKCVQDAIRDKKERFNFMGEEISLIPSVGIFITMNPGYAGRTELPENLKALFRPCAMVVPDFELICEIMLVAEGFLDARLLARKFITLYTLCKELLSKQDHYDWGLRAIKSVLVVAGSLKRGDPQRPEDQVLMRALRDFNVPKIVSDDTPVFMGLIGDLFPALDVPRRRDMDFEKVVKQSTLDLKLQAEDSFVLKVVQLEELLAVRHSVFVIGNAGTGKSQVLKVLNKTYSNMKRKPVLVDLNPKAVTNDELFGIINPATREWKDGLFSVIMRDMSNITHDGPKWIVLDGDIDPMWIESLNTVMDDNKVLTLASNERIPLTPSMRLLFEISHLKTATPATVSRAGILYINPSDLGWNPIVTSWIDTREVQSERANLTILFDKYLPTLLDTLRVRFKKIIPIPEQSMVQMLCYLLECLLTPENTPADCPKELYELYFVFASIWAFGGSMFQDQLVDYRVEFSKWWITEFKTIKFPNQGTVFDYFIDQESKKFLPWSEKVPVFELDPEIPMQAVLVHTNETTRVRFFMDLLMERGRPVMLVGNAGLGKSVLVGDKLSNLGEDSMVANVPFNYYTTSEMLQRVLEKPLEKKAGRNYGPPGTKKLVYFIDDMNMPEVDTYGTVQPHTLIRQHMDYKHWYDRQKLTLKEIHKCQYVSCMNPTAGSFTINSRLQRHFCVFALSFPGQDALSTIYNSILSQHLANISVSNALQKLSPTVVSATLDLHKKVAQSFLPTAIKFHYVFNLRDLSNVFQGLLYSGPDLLKAPIDFARLWMHECQRVYGDKMINDQDIEAFEKLVLEYAKKFFEDVDEEALKAKPNIHCHFATGIGDPKYMQVPNWPELNKILVEALDTYNEINAVMNLVLFEDAMQHVCRINRILESPRGNALLVGVGGSGKQSLARLASYISSLEVFQITLRKGYGIPDLKLDLATVCMKAGLKNIGTVFLMTDAQVSDEKFLVLINDLLASGEIPDLFADDEVENIIGGVRNEVKGMGLQDTRENCWKFFIDRLRRQLKTVLCFSPVGTTLRVRSRKFPAVVNCTSIDWFHEWPQEALVSVSMRFLDEVELLKGDIKKSIAEFMAYVHVSVNESSKLYLTNERRYNYTTPKSFLEQIKLYESLLSMKSKELTAKMERLENGLTKLQSTAQQVDDLKAKLASQEVELAQKNEDADKLIQVVGVETEKVSKEKAIADDEEKKVAIINEEVSKKAKDCSEDLAKAEPALLAAQEALNTLNKNNLTELKSFGSPPSAVLKVAAAVMVLLAPNGKIPKDRSWKAAKVVMNKVDAFLDSLINYDKENIHENCLKSIKEYLNDPEFEPEYIKGKSLAAGGLCSWVVNIVKFYNVYCDVEPKRIALQKANDELKAAQDKLALIKAKIAELDANLAELTAQFEKATSDKLKCQQEAEATSRTITLANRLVGGLASENVRWGEAVANFKIQEKTLPGDVLLITAFVSYIGCFTKTYRVDLQERMWLPFLKSQKDPIPITEGLDVLSMLTDDADIAVWNNEGLPSDRMSTENATILSNCQRWPLMIDPQLQGIKWIKQKYGDDLRVIRIGQRGYLDTIENAISSGDTVLIENMEESIDPVLDPVLGRNTIKKGRYIKIGDKEVEYNPDFRLILQTKLANPHYKPEMQAQTTLINFTVTRDGLEDQLLANVVAQERPDLEKLKSDLTKQQNDFKIILKELEDNLLSRLSSAEGNFLGDTALVENLETTKRTAAEISVKVEEAKVTEVKINEARELYRPAAARASLLYFILNDLNKINPIYQFSLKAFNTVFSLPIARAEPCEDVKERVVNLIDCITYSVFIYTTRGLFEADKLIFTTQVAFQVLLMKKEIAQNELDFLLRFPIQVGLTSPVDFLTNSAWGAIKSLSAMEDFRNLDRDIEGSAKRWKKFVESECPEKEKFPQEWKNKSALQKLCMMRALRADRMSYAVRNFIEEKLGSKYVEGRQVEFAKSYEETDPATPVFFILSPGVDPLKDVEALGKKLGFTFDNNNFHNVSLGQGQEIVAEQCMDLAAKEGHWVILQNIHLVAKWLSTLEKKLEQYSVGSHDSYRVYMSAEPAGSPEAHIIPQGILESSIKITNEPPTGMFANLHKALYNFNQDTLEMCAREAEFKVILFALCYFHAVVCERQKFGPQGWNRSYPFNTGDLTISVNVLYNYLEANSKVPWQDLRYLFGEIMYGGHITDDWDRRLCRTYLEEYMAPEMLDGELYLAPGFPVPPNSDYKGYHQYIDEILPPESPYLYGLHPNAEIGFLTTESDNLFKIVLELQPRDAGGGGGGGSSREEKIKSLLDEIVEKLPEEFNMMEIMAKVEDRTPYVVVAFQECERMNMLTSEIRRSLKELDLGLKGELTITPDMEDLSNALFLDQIPATWVKRAYPSLFGLTSWYADLLQRIKELEQWTADFALPNVVWLGGFFNPQSFLTAIMQSMARKNEWPLDKMCLQCDVTKKNKEDFSSAPREGSYVHGLFMEGARWDTQTNMIADARLKELAPNMPVIFIKAIPVDKQDTRNIYECPVYKTKQRGPTFVWTFNLKSKEKAAKWTLAGVALLLQV.

The tract at residues 1-1813 is stem; sequence MADVVDPRLE…YANICDAQFK (1813 aa). ATP is bound at residue 154–161; the sequence is AGQVKGKT. Coiled-coil stretches lie at residues 733-805, 1036-1056, 1306-1337, and 1443-1468; these read TVLE…WTKQ, TLDQFKEQVDTYEKIYSEADE, WLEINVEQMEMDCKKFAKDIRSLDKEMRAWDA, and LLKSNEELIETLEDNQVQLQNLMTSK. AAA stretches follow at residues 1814-2035, 2095-2316, 2422-2669, and 2767-3016; these read YSYE…VLVV, KVVK…VRFK, ELDP…VFQG, and TYNE…ERRY. Residues 1852-1859, 2133-2140, 2460-2467, and 2805-2812 each bind ATP; these read GPAGTGKT, GNAGTGKS, GNAGLGKS, and GVGGSGKQ. 3 coiled-coil regions span residues 3033–3092, 3263–3325, and 3573–3642; these read SLLS…QVVG, EPKR…SRTI, and QERP…EEAK. The tract at residues 3033–3325 is stalk; the sequence is SLLSMKSKEL…QEAEATSRTI (293 aa). AAA stretches follow at residues 3409–3636 and 3846–4072; these read LTDD…EISV and VRNF…VLYN.

The protein belongs to the dynein heavy chain family. As to quaternary structure, consists of at least two heavy chains (alpha and beta), three intermediate chains and several light chains.

It is found in the cell projection. The protein localises to the cilium. The protein resides in the flagellum. It localises to the cytoplasm. Its subcellular location is the cytoskeleton. It is found in the flagellum axoneme. Functionally, force generating protein of eukaryotic cilia and flagella. Produces force towards the minus ends of microtubules. Dynein has ATPase activity; the force-producing power stroke is thought to occur on release of ADP. In Tripneustes gratilla (Hawaian sea urchin), this protein is Dynein beta chain, ciliary.